Consider the following 455-residue polypeptide: MSYFGTDGIRGKFGELPITPDFILKLGYVTGLVLIENSQNSARKPSVVIGKDTRLSGYVIEGALQAGFNAAGVDVHMLGPLPTPAIAHLTRSFNADAGVVISASHNPYYDNGIKFFSGDGKKLTDEMQNAINDKLDTIMAATGSNDALMPILDPAQLGKNNRIDDAKGRYIEFCKGSFPYQYDLDHLTVVVDCANGAGYSVAPRVMRELGANVIAINHKPDGININAHCGSTHPEGLQAAVLKYEADVGIALDGDGDRIVMVDEAGHLVDGDGILYVLATQGQTKVAGVVGTLMSNMGLELALKAADIEFTRAKVGDRYVMQELEANGWILGGEPSGHILCLDKSRTGDAIIASLQILAVMQARGKALSDLTEGFEVLPQKLVNVRLSQMQDPFEHEELVAAFDKARATLEGRGRLLIRQSGTEPMIRVMVESDDEIECDVMANDLADKIKDTLG.

S104 serves as the catalytic Phosphoserine intermediate. Residues S104, D253, D255, and D257 each contribute to the Mg(2+) site. S104 is modified (phosphoserine).

The protein belongs to the phosphohexose mutase family. It depends on Mg(2+) as a cofactor. In terms of processing, activated by phosphorylation.

The catalysed reaction is alpha-D-glucosamine 1-phosphate = D-glucosamine 6-phosphate. Its function is as follows. Catalyzes the conversion of glucosamine-6-phosphate to glucosamine-1-phosphate. The polypeptide is Phosphoglucosamine mutase (Psychrobacter arcticus (strain DSM 17307 / VKM B-2377 / 273-4)).